Reading from the N-terminus, the 633-residue chain is DNA repair protein XRCC1 (633 aa).

Residue S140 is modified to Phosphoserine. K176 participates in a covalent cross-link: Glycyl lysine isopeptide (Lys-Gly) (interchain with G-Cter in SUMO1); alternate. Residue K176 forms a Glycyl lysine isopeptide (Lys-Gly) (interchain with G-Cter in SUMO2); alternate linkage. Phosphothreonine is present on T198. Phosphoserine is present on S199. Position 202 is a phosphothreonine (T202). S204, S226, and S241 each carry phosphoserine. The segment covering 221–231 (AASSASPVSRA) has biased composition (low complexity). Positions 221–313 (AASSASPVSR…TEPRRPRAGP (93 aa)) are disordered. Residues 240-257 (ESPKGKRKLDLNQEEKKT) are compositionally biased toward basic and acidic residues. At T257 the chain carries Phosphothreonine. 2 positions are modified to phosphoserine: S259 and S266. Residues 277–291 (APTRTPATAPVPARA) are compositionally biased toward low complexity. Residue T281 is modified to Phosphothreonine. Basic and acidic residues predominate over residues 299–313 (PRGEGTEPRRPRAGP). One can recognise a BRCT 1 domain in the interval 315–403 (ELGKILQGVV…RRLPSQRYLM (89 aa)). Position 371 is a phosphoserine; by PRKDC (S371). 3 disordered regions span residues 400–462 (RYLM…AASP), 471–490 (EGVQ…DTED), and 498–536 (QKEH…DLPV). 4 positions are modified to phosphoserine: S408, S409, S410, and S421. Positions 427 to 443 (KLPQKQPQTKTKPTQAA) are enriched in low complexity. Phosphoserine occurs at positions 446 and 447. Phosphothreonine occurs at positions 453 and 457. S461 and S485 each carry phosphoserine. Residues 481 to 490 (GAEDSGDTED) are compositionally biased toward acidic residues. Phosphothreonine is present on T488. S518 bears the Phosphoserine mark. Phosphothreonine occurs at positions 519 and 523. A BRCT 2 domain is found at 538 to 629 (ELPDFFQGKH…KLLPHQLYGV (92 aa)).

As to quaternary structure, homodimer. Interacts with polynucleotide kinase (PNK), DNA polymerase-beta (POLB) and DNA ligase III (LIG3). Interacts with APTX and APLF. Interacts with APEX1; the interaction is induced by SIRT1 and increases with the acetylated form of APEX1. Interacts with (poly-ADP-ribosylated) PARP1. In terms of processing, phosphorylation of Ser-371 causes dimer dissociation. Phosphorylation by CK2 promotes interaction with APTX and APLF. Sumoylated. In terms of tissue distribution, expressed in fibroblasts, retinal pigmented epithelial cells and lymphoblastoid cells (at protein level).

It localises to the nucleus. It is found in the chromosome. Scaffold protein involved in DNA single-strand break repair by mediating the assembly of DNA break repair protein complexes. Negatively regulates ADP-ribosyltransferase activity of PARP1 during base-excision repair in order to prevent excessive PARP1 activity. Recognizes and binds poly-ADP-ribose chains: specifically binds auto-poly-ADP-ribosylated PARP1, limiting its activity. In Homo sapiens (Human), this protein is DNA repair protein XRCC1.